A 312-amino-acid chain; its full sequence is Bifunctional pinoresinol-lariciresinol reductase 2 (312 aa).

Residues 11 to 17 (GGTGYIG), Arg-36, and Lys-45 each bind NADP(+). Catalysis depends on Lys-138, which acts as the Proton acceptor. Arg-142 serves as a coordination point for NADP(+). His-270 provides a ligand contact to substrate.

This sequence belongs to the NmrA-type oxidoreductase family. Isoflavone reductase subfamily. As to quaternary structure, dimer.

It catalyses the reaction (+)-lariciresinol + NADP(+) = (+)-pinoresinol + NADPH + H(+). The enzyme catalyses (-)-secoisolariciresinol + NADP(+) = (+)-lariciresinol + NADPH + H(+). The catalysed reaction is (-)-lariciresinol + NADP(+) = (-)-pinoresinol + NADPH + H(+). Its function is as follows. Reductase involved in lignan biosynthesis. Catalyzes the enantioselective sequential conversion of (+)-pinoresinol into (+)-lariciresinol and of (+)-lariciresinol into (-)-secoisolariciresinol. Can also convert with a lower efficiency (-)-pinoresinol into (-)-lariciresinol, but not (-)-lariciresinol into (+)-secoisolariciresinol. Abstracts the 4R-hydride from the NADPH cofactor during catalysis. The chain is Bifunctional pinoresinol-lariciresinol reductase 2 (PLR_Tp2) from Thuja plicata (Western red-cedar).